The following is a 195-amino-acid chain: Imidazoleglycerol-phosphate dehydratase (195 aa).

The protein belongs to the imidazoleglycerol-phosphate dehydratase family.

The protein localises to the cytoplasm. It carries out the reaction D-erythro-1-(imidazol-4-yl)glycerol 3-phosphate = 3-(imidazol-4-yl)-2-oxopropyl phosphate + H2O. It functions in the pathway amino-acid biosynthesis; L-histidine biosynthesis; L-histidine from 5-phospho-alpha-D-ribose 1-diphosphate: step 6/9. The sequence is that of Imidazoleglycerol-phosphate dehydratase from Cereibacter sphaeroides (strain ATCC 17029 / ATH 2.4.9) (Rhodobacter sphaeroides).